Reading from the N-terminus, the 346-residue chain is Glycerol-1-phosphate dehydrogenase [NAD(P)+] (346 aa).

Residues G93 to D97 and T115 to S118 each bind NAD(+). D120 serves as a coordination point for substrate. S124 contributes to the NAD(+) binding site. D167 contributes to the substrate binding site. Residues D167 and H247 each coordinate Zn(2+). H251 is a substrate binding site. Position 263 (H263) interacts with Zn(2+).

Belongs to the glycerol-1-phosphate dehydrogenase family. The cofactor is Zn(2+).

Its subcellular location is the cytoplasm. It catalyses the reaction sn-glycerol 1-phosphate + NAD(+) = dihydroxyacetone phosphate + NADH + H(+). The enzyme catalyses sn-glycerol 1-phosphate + NADP(+) = dihydroxyacetone phosphate + NADPH + H(+). It functions in the pathway membrane lipid metabolism; glycerophospholipid metabolism. Functionally, catalyzes the NAD(P)H-dependent reduction of dihydroxyacetonephosphate (DHAP or glycerone phosphate) to glycerol 1-phosphate (G1P). The G1P thus generated is used as the glycerophosphate backbone of phospholipids in the cellular membranes of Archaea. This chain is Glycerol-1-phosphate dehydrogenase [NAD(P)+], found in Pyrococcus furiosus (strain ATCC 43587 / DSM 3638 / JCM 8422 / Vc1).